The sequence spans 404 residues: Cysteine desulfurase IscS (404 aa).

Pyridoxal 5'-phosphate is bound by residues 75 to 76 (AT), asparagine 155, glutamine 183, and 203 to 205 (SAH). Lysine 206 is modified (N6-(pyridoxal phosphate)lysine). Position 243 (threonine 243) interacts with pyridoxal 5'-phosphate. The active-site Cysteine persulfide intermediate is the cysteine 328. Cysteine 328 lines the [2Fe-2S] cluster pocket.

The protein belongs to the class-V pyridoxal-phosphate-dependent aminotransferase family. NifS/IscS subfamily. As to quaternary structure, homodimer. Forms a heterotetramer with IscU, interacts with other sulfur acceptors. Pyridoxal 5'-phosphate serves as cofactor.

The protein localises to the cytoplasm. It catalyses the reaction (sulfur carrier)-H + L-cysteine = (sulfur carrier)-SH + L-alanine. It functions in the pathway cofactor biosynthesis; iron-sulfur cluster biosynthesis. In terms of biological role, master enzyme that delivers sulfur to a number of partners involved in Fe-S cluster assembly, tRNA modification or cofactor biosynthesis. Catalyzes the removal of elemental sulfur atoms from cysteine to produce alanine. Functions as a sulfur delivery protein for Fe-S cluster synthesis onto IscU, an Fe-S scaffold assembly protein, as well as other S acceptor proteins. The polypeptide is Cysteine desulfurase IscS (Pseudomonas putida (strain GB-1)).